Reading from the N-terminus, the 126-residue chain is Fluoride-specific ion channel FluC 2 (126 aa).

The next 4 membrane-spanning stretches (helical) occupy residues 5–25 (TALT…GSVL), 44–64 (GTLT…GLAL), 68–88 (AALL…TWML), and 99–119 (MVSA…AALL). Na(+)-binding residues include Gly-78 and Thr-81.

Belongs to the fluoride channel Fluc/FEX (TC 1.A.43) family.

It localises to the cell membrane. The enzyme catalyses fluoride(in) = fluoride(out). Its activity is regulated as follows. Na(+) is not transported, but it plays an essential structural role and its presence is essential for fluoride channel function. Fluoride-specific ion channel. Important for reducing fluoride concentration in the cell, thus reducing its toxicity. The sequence is that of Fluoride-specific ion channel FluC 2 from Mycobacterium bovis (strain ATCC BAA-935 / AF2122/97).